The chain runs to 479 residues: Adenosylhomocysteinase (479 aa).

Substrate contacts are provided by T65, D145, and E205. 206–208 serves as a coordination point for NAD(+); it reads TTT. K235 and D239 together coordinate substrate. NAD(+) contacts are provided by residues N240, 269 to 274, E292, N327, 348 to 350, and N393; these read GYGDVG and IGH.

The protein belongs to the adenosylhomocysteinase family. NAD(+) is required as a cofactor.

It is found in the cytoplasm. The catalysed reaction is S-adenosyl-L-homocysteine + H2O = L-homocysteine + adenosine. Its pathway is amino-acid biosynthesis; L-homocysteine biosynthesis; L-homocysteine from S-adenosyl-L-homocysteine: step 1/1. Its function is as follows. May play a key role in the regulation of the intracellular concentration of adenosylhomocysteine. This chain is Adenosylhomocysteinase, found in Janthinobacterium sp. (strain Marseille) (Minibacterium massiliensis).